The sequence spans 636 residues: MTGLEGAQNLTVADKQLTPDEGVLTESPKMTNIHEIVEDTAASSENGDSEAKEIAAKIRAGTLENVEFTEYANYLGTPGNDQILREFLLLLDPLPSSITGTLRKLSSSLYFIAEAANLDTILEALSRQWLSEHNKAHYQDNYKLCHIVMFALLMLNSTLHNSEADLSFTIEEFRENTINALQKESPDIDVPSFNRELSLCYYQLDNEQLPLLRPPSQPRYSLSGRRTNGNGGHSNMKKASMLSLERFQTNQSLISTQNSMATLTSRDTTANSNYRMRNNKPLQKLYLDEPFDAELQDLNGTPWLMDSMVNVQEASKANNSTSQLLSSPVTRKRKLMSWFRKHTKDTIFNENIHAADTDNWQHARIRIYQGRLFVYKFKGFGRERSIPRDIHKWSLEMCKRSCSQFHVYNLYGTIASLVQENIVASENSNVSSASFLIDFPHGLDSTSGLSFRFKTRNQDEAKQFTACCNFWSARISPIPSAQVEMISNEEYGWSPRLLEGESGAEQVNLAQVKLAHWKPLVGLDAIFSELDEGIALWDFDSQLGNLRVFTELLGAQLDEHNAVKPKMVELWAKKGREYQPQFEAAMENWNNKYLYLNKQYQKHLVYLKALENAVQFYERSKSVKNPETKNAAKEQS.

2 disordered regions span residues 1 to 29 (MTGLEGAQNLTVADKQLTPDEGVLTESPK) and 213 to 234 (RPPSQPRYSLSGRRTNGNGGHS). In terms of domain architecture, SEC7 spans 1-203 (MTGLEGAQNL…NRELSLCYYQ (203 aa)). The region spanning 333 to 475 (RKLMSWFRKH…ACCNFWSARI (143 aa)) is the PH domain.

The protein belongs to the YEL1 family.

It localises to the cytoplasm. The protein resides in the cell membrane. It is found in the bud neck. Its subcellular location is the bud tip. Functionally, guanine nucleotide exchange factor for ARF3 required for localization of ARF3 to the bud neck and tip and involved in actin patch polarization. The sequence is that of Guanine-nucleotide exchange factor YEL1 (YEL1) from Lachancea thermotolerans (strain ATCC 56472 / CBS 6340 / NRRL Y-8284) (Yeast).